The chain runs to 667 residues: uncharacterized protein (667 aa).

Residues 321 to 345 (AGEAASSDHDQKISRVTRKRPREPK) are disordered. Residues 375-552 (EIYMADTPSV…LQRIGLTGLA (178 aa)) enclose the Helicase ATP-binding domain. Residue 388-395 (APPGYGKT) participates in ATP binding. A DEAH box motif is present at residues 498-501 (DEFH).

This sequence belongs to the helicase family. Yeast subtelomeric Y' repeat subfamily.

This is an uncharacterized protein from Saccharomyces cerevisiae (strain ATCC 204508 / S288c) (Baker's yeast).